Reading from the N-terminus, the 1206-residue chain is DNA-directed RNA polymerase subunit beta' (1206 aa).

Residues Cys60, Cys62, Cys75, and Cys78 each coordinate Zn(2+). Mg(2+) contacts are provided by Asp449, Asp451, and Asp453. Residues Cys822, Cys896, Cys903, and Cys906 each contribute to the Zn(2+) site.

It belongs to the RNA polymerase beta' chain family. The RNAP catalytic core consists of 2 alpha, 1 beta, 1 beta' and 1 omega subunit. When a sigma factor is associated with the core the holoenzyme is formed, which can initiate transcription. The cofactor is Mg(2+). Zn(2+) is required as a cofactor.

It carries out the reaction RNA(n) + a ribonucleoside 5'-triphosphate = RNA(n+1) + diphosphate. Its function is as follows. DNA-dependent RNA polymerase catalyzes the transcription of DNA into RNA using the four ribonucleoside triphosphates as substrates. In Staphylococcus haemolyticus (strain JCSC1435), this protein is DNA-directed RNA polymerase subunit beta'.